We begin with the raw amino-acid sequence, 341 residues long: Glyceraldehyde-3-phosphate dehydrogenase 3.1 (341 aa).

NAD(+)-binding positions include 13–14 (RI), Asp-35, and Arg-85. D-glyceraldehyde 3-phosphate-binding positions include 157–159 (SCT), Thr-188, 217–218 (TG), and Arg-240. Catalysis depends on Cys-158, which acts as the Nucleophile. Asn-322 contributes to the NAD(+) binding site.

The protein belongs to the glyceraldehyde-3-phosphate dehydrogenase family. As to quaternary structure, homotetramer.

The protein localises to the cytoplasm. The enzyme catalyses D-glyceraldehyde 3-phosphate + phosphate + NAD(+) = (2R)-3-phospho-glyceroyl phosphate + NADH + H(+). It participates in carbohydrate degradation; glycolysis; pyruvate from D-glyceraldehyde 3-phosphate: step 1/5. The sequence is that of Glyceraldehyde-3-phosphate dehydrogenase 3.1 from Caenorhabditis briggsae.